The primary structure comprises 315 residues: 4-diphosphocytidyl-2-C-methyl-D-erythritol kinase (315 aa).

The active site involves Lys26. 111–121 contributes to the ATP binding site; sequence PLAGGLAGGSA. The active site involves Asp153.

Belongs to the GHMP kinase family. IspE subfamily.

It catalyses the reaction 4-CDP-2-C-methyl-D-erythritol + ATP = 4-CDP-2-C-methyl-D-erythritol 2-phosphate + ADP + H(+). The protein operates within isoprenoid biosynthesis; isopentenyl diphosphate biosynthesis via DXP pathway; isopentenyl diphosphate from 1-deoxy-D-xylulose 5-phosphate: step 3/6. Catalyzes the phosphorylation of the position 2 hydroxy group of 4-diphosphocytidyl-2C-methyl-D-erythritol. This is 4-diphosphocytidyl-2-C-methyl-D-erythritol kinase from Salinispora arenicola (strain CNS-205).